The primary structure comprises 326 residues: tRNA-dihydrouridine(20a/20b) synthase [NAD(P)+] (326 aa).

Residues 26-28 and Gln-79 each bind FMN; that span reads PMV. Cys-108 serves as the catalytic Proton donor. FMN contacts are provided by residues Lys-149, His-177, 208-210, and 232-233; these read NGD and AR.

Belongs to the Dus family. Dus4 subfamily. Requires FMN as cofactor.

The protein resides in the mitochondrion. The catalysed reaction is 5,6-dihydrouridine(20a) in tRNA + NADP(+) = uridine(20a) in tRNA + NADPH + H(+). The enzyme catalyses 5,6-dihydrouridine(20a) in tRNA + NAD(+) = uridine(20a) in tRNA + NADH + H(+). It carries out the reaction 5,6-dihydrouridine(20b) in tRNA + NAD(+) = uridine(20b) in tRNA + NADH + H(+). It catalyses the reaction 5,6-dihydrouridine(20b) in tRNA + NADP(+) = uridine(20b) in tRNA + NADPH + H(+). The catalysed reaction is a 5,6-dihydrouridine in mRNA + NAD(+) = a uridine in mRNA + NADH + H(+). The enzyme catalyses a 5,6-dihydrouridine in mRNA + NADP(+) = a uridine in mRNA + NADPH + H(+). Catalyzes the synthesis of dihydrouridine, a modified base found in the D-loop of most tRNAs. Also able to mediate dihydrouridylation of some mRNAs, thereby affecting their translation. This is tRNA-dihydrouridine(20a/20b) synthase [NAD(P)+] from Schizosaccharomyces pombe (strain 972 / ATCC 24843) (Fission yeast).